Consider the following 660-residue polypeptide: tRNA 5-methylaminomethyl-2-thiouridine biosynthesis bifunctional protein MnmC (660 aa).

The tract at residues 1–241 (MNDHPAQDAF…KREILRGHLQ (241 aa)) is tRNA (mnm(5)s(2)U34)-methyltransferase. Residues 268-660 (IGAGLAGCAT…FLLRKLIRGT (393 aa)) are FAD-dependent cmnm(5)s(2)U34 oxidoreductase.

In the N-terminal section; belongs to the methyltransferase superfamily. tRNA (mnm(5)s(2)U34)-methyltransferase family. This sequence in the C-terminal section; belongs to the DAO family. It depends on FAD as a cofactor.

The protein resides in the cytoplasm. The catalysed reaction is 5-aminomethyl-2-thiouridine(34) in tRNA + S-adenosyl-L-methionine = 5-methylaminomethyl-2-thiouridine(34) in tRNA + S-adenosyl-L-homocysteine + H(+). Its function is as follows. Catalyzes the last two steps in the biosynthesis of 5-methylaminomethyl-2-thiouridine (mnm(5)s(2)U) at the wobble position (U34) in tRNA. Catalyzes the FAD-dependent demodification of cmnm(5)s(2)U34 to nm(5)s(2)U34, followed by the transfer of a methyl group from S-adenosyl-L-methionine to nm(5)s(2)U34, to form mnm(5)s(2)U34. This is tRNA 5-methylaminomethyl-2-thiouridine biosynthesis bifunctional protein MnmC from Stutzerimonas stutzeri (strain A1501) (Pseudomonas stutzeri).